The chain runs to 420 residues: 3-phosphoshikimate 1-carboxyvinyltransferase (420 aa).

The tract at residues 1–24 (MTRTAKLTIIPPGRPLSGRAMPPG) is disordered. Lysine 26, serine 27, and arginine 31 together coordinate 3-phosphoshikimate. Lysine 26 lines the phosphoenolpyruvate pocket. Residues glycine 97 and arginine 125 each contribute to the phosphoenolpyruvate site. 3-phosphoshikimate contacts are provided by serine 170, serine 171, glutamine 172, aspartate 297, asparagine 320, and lysine 324. A phosphoenolpyruvate-binding site is contributed by glutamine 172. Aspartate 297 acts as the Proton acceptor in catalysis. Phosphoenolpyruvate-binding residues include arginine 328, arginine 375, and lysine 400.

Belongs to the EPSP synthase family. As to quaternary structure, monomer.

It localises to the cytoplasm. The enzyme catalyses 3-phosphoshikimate + phosphoenolpyruvate = 5-O-(1-carboxyvinyl)-3-phosphoshikimate + phosphate. It participates in metabolic intermediate biosynthesis; chorismate biosynthesis; chorismate from D-erythrose 4-phosphate and phosphoenolpyruvate: step 6/7. Catalyzes the transfer of the enolpyruvyl moiety of phosphoenolpyruvate (PEP) to the 5-hydroxyl of shikimate-3-phosphate (S3P) to produce enolpyruvyl shikimate-3-phosphate and inorganic phosphate. The polypeptide is 3-phosphoshikimate 1-carboxyvinyltransferase (Rhizobium etli (strain CIAT 652)).